A 1224-amino-acid polypeptide reads, in one-letter code: Protein MSN5 (1224 aa).

A disordered region spans residues 1200-1224; that stretch reads NKENGDMLDDPNIEDGAVGNLFDDN.

In terms of assembly, interacts with CEX1.

The chain is Protein MSN5 (MSN5) from Saccharomyces cerevisiae (strain ATCC 204508 / S288c) (Baker's yeast).